We begin with the raw amino-acid sequence, 96 residues long: DNA-binding protein HmvA (96 aa).

The segment at 52–55 (KTIK) is interaction with DNA.

Belongs to the archaeal histone HMF family. As to quaternary structure, homodimer. Dimers then assemble into higher oligomers, with the DNA wrapped around the protein core.

Its subcellular location is the cytoplasm. It localises to the chromosome. Binds and compact DNA (95 to 150 base pairs) to form nucleosome-like structures that contain positive DNA supercoils. Increases the resistance of DNA to thermal denaturation (in vitro). The protein is DNA-binding protein HmvA (hmvA) of Methanocaldococcus jannaschii (strain ATCC 43067 / DSM 2661 / JAL-1 / JCM 10045 / NBRC 100440) (Methanococcus jannaschii).